Here is a 962-residue protein sequence, read N- to C-terminus: Protein lin-36 (962 aa).

Disordered regions lie at residues 1-53 (MSEE…ETEG) and 74-99 (TSSGEVLDESQVTPTKQASSSQPREE). The segment covering 23–40 (DSHVTVHSVEQDSQHSGE) has biased composition (basic and acidic residues). The segment covering 74–95 (TSSGEVLDESQVTPTKQASSSQ) has biased composition (polar residues). A THAP-type zinc finger spans residues 161–249 (LTHKPCTVCN…IEAFGVPVAI (89 aa)). 2 stretches are compositionally biased toward basic and acidic residues: residues 452–472 (KAEESAQGTKEQESSQKKHAE) and 534–570 (SHEEEHDPTPESVEREPTVSPNDPRERLRLKERDEQF). 4 disordered regions span residues 452–575 (KAEE…KMVQ), 612–676 (IAAT…PEER), 744–788 (QEKG…SASS), and 932–962 (DPKWRELQQQQQQQQQQQEQFPGQGSSDSQQ). Low complexity predominate over residues 626 to 637 (SSEQTPEPTTSQ). Residues 647 to 658 (KTKESAVQKVEK) are compositionally biased toward basic and acidic residues. The segment covering 939–951 (QQQQQQQQQQQEQ) has biased composition (low complexity). The segment covering 952-962 (FPGQGSSDSQQ) has biased composition (polar residues).

In terms of tissue distribution, expressed in vulval precursor P(3-8).p cells and their descendants, neurons of the head, tail and ventral cord, hypodermal and intestinal cells and germline cells.

It is found in the nucleus. Required to negatively regulate vulval development. Antagonizes Ras-mediated vulval induction. Acts cell autonomously. The chain is Protein lin-36 (lin-36) from Caenorhabditis elegans.